The chain runs to 706 residues: MEKTFSLSRRDDGIALLTMDVPGETMNTLKAQFAPEITAILQEIKADSSIKGLVLISGKADSFVAGADISMLDACETAEDARLLSRQGHHVFAELEGLNIPVVAAIHGACLGGGLELALACHQRVCSDSSKTMLGVPEVQLGLLPGGGGTQRLPRLIGIAKALDLMLTGKQVRPKQAVKMGLVDDVVPESILLDTAIEMALAGKKTRKPLKQPLVTKLLEGTPVGRNIMFDQATKQVLKKTQGNYPSPLKIIDCVREGMAKGMEKGLEVEAAHFGALVATPESAALRSIFFATTEMKKETGAGDAKPRKVAKAVVLGGGLMGGGIASVTTTKAKVPVRVKDISDKGLSNALGYAYKLLDKGVKRRHMTSAERDKLMALMTTTTEYRGVKDADIVVEAVFEDLNLKHQMVRDIERECGEHTIFASNTSSLPITQIAAAASRPENVIGLHYFSPVEKMPLVEVIAHEKTSPETIATTVAFARKQGKTPIVVKDCAGFYVNRILALYMNEAAQLLLEGQAVDHLDKALVKFGFPVGPMTLLDEVGIDVGAKISPILEKELGERFKAPAAFDKLMADDRKGRKNGKGFYLYGKAAKKGKKVDESVYSLLGLTPATGKEAGEIAERCVVQMLNEAVRCLEEGIIASPRDGDIGAIFGIGFPPFLGGPFRYMDTLGAAKMVRLLEGYQSKYGDRFAPAALLKAMAAEGKTFY.

Residues 1–188 (MEKTFSLSRR…KMGLVDDVVP (188 aa)) form an enoyl-CoA hydratase region. The interval 308–706 (RKVAKAVVLG…AMAAEGKTFY (399 aa)) is 3-hydroxyacyl-CoA dehydrogenase.

The protein in the N-terminal section; belongs to the enoyl-CoA hydratase/isomerase family. In the central section; belongs to the 3-hydroxyacyl-CoA dehydrogenase family. In terms of assembly, heterotetramer of two alpha chains (FadJ) and two beta chains (FadI).

The protein localises to the cytoplasm. It carries out the reaction a (3S)-3-hydroxyacyl-CoA = a (2E)-enoyl-CoA + H2O. The enzyme catalyses a 4-saturated-(3S)-3-hydroxyacyl-CoA = a (3E)-enoyl-CoA + H2O. The catalysed reaction is a (3S)-3-hydroxyacyl-CoA + NAD(+) = a 3-oxoacyl-CoA + NADH + H(+). It catalyses the reaction (3S)-3-hydroxybutanoyl-CoA = (3R)-3-hydroxybutanoyl-CoA. It functions in the pathway lipid metabolism; fatty acid beta-oxidation. Its function is as follows. Catalyzes the formation of a hydroxyacyl-CoA by addition of water on enoyl-CoA. Also exhibits 3-hydroxyacyl-CoA epimerase and 3-hydroxyacyl-CoA dehydrogenase activities. This is Fatty acid oxidation complex subunit alpha from Shewanella amazonensis (strain ATCC BAA-1098 / SB2B).